Here is a 1032-residue protein sequence, read N- to C-terminus: tRNA wybutosine-synthesizing protein 4 (1032 aa).

S-adenosyl-L-methionine-binding positions include arginine 69, glycine 95, aspartate 122, 169–170, and glutamate 196; that span reads DL. Residues 702 to 726 are disordered; that stretch reads ESVEPNKSQSEKATSKPSAQSQNEP. Over residues 716 to 725 the composition is skewed to polar residues; that stretch reads SKPSAQSQNE. Residues 833-988 enclose the JmjC domain; that stretch reads PTKLPANLAV…AAGRDVYGNR (156 aa).

Belongs to the methyltransferase superfamily. LCMT family.

It carries out the reaction 7-[(3S)-3-amino-3-carboxypropyl]wyosine(37) in tRNA(Phe) + S-adenosyl-L-methionine = 7-[(3S)-(3-amino-3-methoxycarbonyl)propyl]wyosine(37) in tRNA(Phe) + S-adenosyl-L-homocysteine. The catalysed reaction is 7-[(3S)-(3-amino-3-methoxycarbonyl)propyl]wyosine(37) in tRNA(Phe) + S-adenosyl-L-methionine + CO2 = wybutosine(37) in tRNA(Phe) + S-adenosyl-L-homocysteine + 2 H(+). Its pathway is tRNA modification; wybutosine-tRNA(Phe) biosynthesis. Functionally, probable S-adenosyl-L-methionine-dependent methyltransferase that acts as a component of the wybutosine biosynthesis pathway. Wybutosine is a hyper modified guanosine with a tricyclic base found at the 3'-position adjacent to the anticodon of eukaryotic phenylalanine tRNA. May methylate the carboxyl group of leucine residues to form alpha-leucine ester residues. The polypeptide is tRNA wybutosine-synthesizing protein 4 (ppm2) (Aspergillus oryzae (strain ATCC 42149 / RIB 40) (Yellow koji mold)).